We begin with the raw amino-acid sequence, 336 residues long: Large ribosomal subunit protein mL39 (336 aa).

A TGS domain is found at 60-126; sequence EKIEVKHVGK…TKSCEIKFLT (67 aa). K123 carries the N6-acetyllysine modification.

Belongs to the mitochondrion-specific ribosomal protein mL39 family. In terms of assembly, component of the mitochondrial ribosome large subunit (39S) which comprises a 16S rRNA and about 50 distinct proteins.

Its subcellular location is the mitochondrion. The sequence is that of Large ribosomal subunit protein mL39 (Mrpl39) from Mus musculus (Mouse).